A 111-amino-acid chain; its full sequence is MISTVALFWGLCVVCIINMARYFSSLRALLVVLRGCDPLLYQYVDGGGFFTSHGQPNKQVRLVWYIYAQRYRDHHDEEFIRRCERVRRQFILTSALCGLVVISLIALLIWH.

Transmembrane regions (helical) follow at residues 1–21 and 90–110; these read MIST…NMAR and FILT…LLIW.

It belongs to the universal stress protein B family.

It localises to the cell inner membrane. In Escherichia fergusonii (strain ATCC 35469 / DSM 13698 / CCUG 18766 / IAM 14443 / JCM 21226 / LMG 7866 / NBRC 102419 / NCTC 12128 / CDC 0568-73), this protein is Universal stress protein B.